The following is a 384-amino-acid chain: 8-amino-7-oxononanoate synthase (384 aa).

Residue Arg21 coordinates substrate. 108–109 is a pyridoxal 5'-phosphate binding site; the sequence is GF. Position 133 (His133) interacts with substrate. Residues Ser179, His207, and Thr233 each contribute to the pyridoxal 5'-phosphate site. Lys236 carries the post-translational modification N6-(pyridoxal phosphate)lysine. Thr352 serves as a coordination point for substrate.

Belongs to the class-II pyridoxal-phosphate-dependent aminotransferase family. BioF subfamily. In terms of assembly, homodimer. Pyridoxal 5'-phosphate serves as cofactor.

The enzyme catalyses 6-carboxyhexanoyl-[ACP] + L-alanine + H(+) = (8S)-8-amino-7-oxononanoate + holo-[ACP] + CO2. Its pathway is cofactor biosynthesis; biotin biosynthesis. Catalyzes the decarboxylative condensation of pimeloyl-[acyl-carrier protein] and L-alanine to produce 8-amino-7-oxononanoate (AON), [acyl-carrier protein], and carbon dioxide. This chain is 8-amino-7-oxononanoate synthase, found in Escherichia coli O9:H4 (strain HS).